The sequence spans 306 residues: MTEKVAVLLGGTSAEREVSLLSGQAVLAGLKEAGINAHAVDTRDFPVTTLKEEGFTNVFIALHGRGGEDGTLQGVLEFLGLPYTGSGVMASALTMDKLRTKQVWQAVGLPVSPYVALDRRQYLDTEANTLLAQFTHLGLPLIVKPSREGSSVGMSKVNTLSDLPAALEEAFRHDDDVLVEKWLSGPEYTVAILGDEVLPSIRIQPAGTFYDYEAKYLSDDTQYFCPSGLSDEQEQALAALAMAAYRAVDCSGWGRVDFMLDSDDAFYLLEVNTSPGMTSHSLVPMAARQRGLTFSQLVVKILELAG.

One can recognise an ATP-grasp domain in the interval 101-303 (KQVWQAVGLP…FSQLVVKILE (203 aa)). ATP is bound at residue 134–189 (FTHLGLPLIVKPSREGSSVGMSKVNTLSDLPAALEEAFRHDDDVLVEKWLSGPEYT). Positions 257, 270, and 272 each coordinate Mg(2+).

Belongs to the D-alanine--D-alanine ligase family. Mg(2+) is required as a cofactor. Mn(2+) serves as cofactor.

It is found in the cytoplasm. It catalyses the reaction 2 D-alanine + ATP = D-alanyl-D-alanine + ADP + phosphate + H(+). It participates in cell wall biogenesis; peptidoglycan biosynthesis. Its function is as follows. Cell wall formation. This is D-alanine--D-alanine ligase from Pectobacterium atrosepticum (strain SCRI 1043 / ATCC BAA-672) (Erwinia carotovora subsp. atroseptica).